The following is a 316-amino-acid chain: 2-phospho-L-lactate guanylyltransferase (316 aa).

The span at 72–85 (TGVSTEAVSTSTST) shows a compositional bias: low complexity. Disordered regions lie at residues 72–107 (TGVS…PTHT) and 119–138 (LRDD…DGDK). The span at 92–107 (HNAASDNYVSQSPTHT) shows a compositional bias: polar residues.

This sequence belongs to the CofC family. Homodimer.

The catalysed reaction is (2S)-2-phospholactate + GTP + H(+) = (2S)-lactyl-2-diphospho-5'-guanosine + diphosphate. It participates in cofactor biosynthesis; coenzyme F420 biosynthesis. Its function is as follows. Guanylyltransferase that catalyzes the activation of (2S)-2-phospholactate (2-PL) as (2S)-lactyl-2-diphospho-5'-guanosine, via the condensation of 2-PL with GTP. It is involved in the biosynthesis of coenzyme F420, a hydride carrier cofactor. The sequence is that of 2-phospho-L-lactate guanylyltransferase from Haloquadratum walsbyi (strain DSM 16790 / HBSQ001).